Reading from the N-terminus, the 306-residue chain is Elongation factor Ts (306 aa).

The segment at 80–83 is involved in Mg(2+) ion dislocation from EF-Tu; it reads TDFV.

It belongs to the EF-Ts family.

The protein localises to the cytoplasm. Functionally, associates with the EF-Tu.GDP complex and induces the exchange of GDP to GTP. It remains bound to the aminoacyl-tRNA.EF-Tu.GTP complex up to the GTP hydrolysis stage on the ribosome. This is Elongation factor Ts from Clostridium novyi (strain NT).